The following is a 173-amino-acid chain: Alpha-crystallin A chain (173 aa).

Methionine 1 is subject to N-acetylmethionine. The interval 1–63 is required for complex formation with BFSP1 and BFSP2; it reads MDIAIQHPWF…RTVLDSGISE (63 aa). Residue glutamine 6 is modified to Deamidated glutamine; partial. Serine 45 is modified (phosphoserine). A Deamidated glutamine; partial modification is found at glutamine 50. A sHSP domain is found at 52 to 162; it reads LFRTVLDSGI…GHSERAIPVS (111 aa). Lysine 70 carries the N6-acetyllysine modification. The residue at position 90 (glutamine 90) is a Deamidated glutamine; partial. Lysine 99 bears the N6-acetyllysine mark. Residue histidine 100 participates in Zn(2+) binding. Residue asparagine 101 is modified to Deamidated asparagine; partial. Residues glutamate 102 and histidine 107 each contribute to the Zn(2+) site. Phosphoserine is present on serine 122. Asparagine 123 bears the Deamidated asparagine; partial mark. A disordered region spans residues 144–173; sequence PKVPSGVDAGHSERAIPVSREEKPSSAPSS. Positions 153 to 167 are enriched in basic and acidic residues; the sequence is GHSERAIPVSREEKP. Histidine 154 serves as a coordination point for Zn(2+). O-linked (GlcNAc) serine glycosylation is present at serine 162.

It belongs to the small heat shock protein (HSP20) family. In terms of assembly, heteromer composed of three CRYAA and one CRYAB subunits. Inter-subunit bridging via zinc ions enhances stability, which is crucial as there is no protein turn over in the lens. Can also form homodimers and homotetramers (dimers of dimers) which serve as the building blocks of homooligomers. Within homooligomers, the zinc-binding motif is created from residues of 3 different molecules. His-100 and Glu-102 from one molecule are ligands of the zinc ion, and His-107 and His-154 residues from additional molecules complete the site with tetrahedral coordination geometry. Part of a complex required for lens intermediate filament formation composed of BFSP1, BFSP2 and CRYAA. Post-translationally, acetylation at Lys-70 may increase chaperone activity. In terms of processing, undergoes age-dependent proteolytical cleavage at the C-terminus.

Its subcellular location is the cytoplasm. The protein localises to the nucleus. Contributes to the transparency and refractive index of the lens. Acts as a chaperone, preventing aggregation of various proteins under a wide range of stress conditions. Required for the correct formation of lens intermediate filaments as part of a complex composed of BFSP1, BFSP2 and CRYAA. The protein is Alpha-crystallin A chain (CRYAA) of Pteropus poliocephalus (Grey-headed flying fox).